Consider the following 382-residue polypeptide: PPE family protein PPE44 (382 aa).

The protein belongs to the mycobacterial PPE family.

The protein resides in the secreted. The protein localises to the cell wall. It is found in the cell surface. Its function is as follows. Virulence factor that modulates host innate immune response. In Mycobacterium tuberculosis (strain CDC 1551 / Oshkosh), this protein is PPE family protein PPE44.